The primary structure comprises 163 residues: Crossover junction endodeoxyribonuclease RuvC (163 aa).

Active-site residues include Asp-7, Glu-66, and Asp-139. Mg(2+)-binding residues include Asp-7, Glu-66, and Asp-139.

It belongs to the RuvC family. In terms of assembly, homodimer which binds Holliday junction (HJ) DNA. The HJ becomes 2-fold symmetrical on binding to RuvC with unstacked arms; it has a different conformation from HJ DNA in complex with RuvA. In the full resolvosome a probable DNA-RuvA(4)-RuvB(12)-RuvC(2) complex forms which resolves the HJ. Mg(2+) serves as cofactor.

It is found in the cytoplasm. It catalyses the reaction Endonucleolytic cleavage at a junction such as a reciprocal single-stranded crossover between two homologous DNA duplexes (Holliday junction).. In terms of biological role, the RuvA-RuvB-RuvC complex processes Holliday junction (HJ) DNA during genetic recombination and DNA repair. Endonuclease that resolves HJ intermediates. Cleaves cruciform DNA by making single-stranded nicks across the HJ at symmetrical positions within the homologous arms, yielding a 5'-phosphate and a 3'-hydroxyl group; requires a central core of homology in the junction. The consensus cleavage sequence is 5'-(A/T)TT(C/G)-3'. Cleavage occurs on the 3'-side of the TT dinucleotide at the point of strand exchange. HJ branch migration catalyzed by RuvA-RuvB allows RuvC to scan DNA until it finds its consensus sequence, where it cleaves and resolves the cruciform DNA. The chain is Crossover junction endodeoxyribonuclease RuvC from Thermomicrobium roseum (strain ATCC 27502 / DSM 5159 / P-2).